The following is a 432-amino-acid chain: Serine hydroxymethyltransferase 1 (432 aa).

(6S)-5,6,7,8-tetrahydrofolate contacts are provided by residues leucine 131 and 135–137 (GHL). An N6-(pyridoxal phosphate)lysine modification is found at lysine 240.

Belongs to the SHMT family. In terms of assembly, homodimer. Requires pyridoxal 5'-phosphate as cofactor.

The protein localises to the cytoplasm. The catalysed reaction is (6R)-5,10-methylene-5,6,7,8-tetrahydrofolate + glycine + H2O = (6S)-5,6,7,8-tetrahydrofolate + L-serine. Its pathway is one-carbon metabolism; tetrahydrofolate interconversion. It functions in the pathway amino-acid biosynthesis; glycine biosynthesis; glycine from L-serine: step 1/1. In terms of biological role, catalyzes the reversible interconversion of serine and glycine with tetrahydrofolate (THF) serving as the one-carbon carrier. This reaction serves as the major source of one-carbon groups required for the biosynthesis of purines, thymidylate, methionine, and other important biomolecules. Also exhibits THF-independent aldolase activity toward beta-hydroxyamino acids, producing glycine and aldehydes, via a retro-aldol mechanism. The sequence is that of Serine hydroxymethyltransferase 1 from Rhodopseudomonas palustris (strain ATCC BAA-98 / CGA009).